The chain runs to 429 residues: U3 small nucleolar RNA-associated protein 18 homolog (429 aa).

4 WD repeats span residues Arg117 to Arg156, Thr295 to Asn336, Asn345 to Asn386, and Gly392 to Asp428.

Belongs to the WD repeat UTP18 family.

It is found in the nucleus. The protein resides in the nucleolus. Involved in nucleolar processing of pre-18S ribosomal RNA. The sequence is that of U3 small nucleolar RNA-associated protein 18 homolog from Caenorhabditis elegans.